A 200-amino-acid chain; its full sequence is Protein RISC-INTERACTING CLEARING 3'-5' EXORIBONUCLEASE 1 (200 aa).

3 oligomerization regions span residues 35–66, 102–127, and 166–173; these read SKILEDSVWNGNRSIVFDVYWDVKSVSTKSEW, KFVTFVGVQIQEDLALLKENHGIVIR, and DSIQSKWD.

It belongs to the RICE family. Homohexamer with DnaQ-like exonuclease fold in a ring-shaped structure with a central cavity. Component of AGO1 and AGO10-centered RNA-induced silencing complexes (RISC). Interacts with and acts as a cofactor of AGO1 and AGO10. In terms of tissue distribution, ubiquitously expressed throughout development in germinating seeds, cotyledons, leaves and roots of young seedlings and adult plants, stems and inflorescence.

It localises to the cytoplasm. It carries out the reaction Exonucleolytic cleavage in the 3'- to 5'-direction to yield nucleoside 5'-phosphates.. 3'-to-5' exoribonuclease (RNase) specifically targeting single-stranded RNAs. Triggers miRNA accumulation in RNA-induced silencing complex (RISC), composed of miRNAs and AGO proteins, by degrading uridylated cleavage fragments. Required during plant growth and development. This chain is Protein RISC-INTERACTING CLEARING 3'-5' EXORIBONUCLEASE 1, found in Arabidopsis thaliana (Mouse-ear cress).